The following is a 491-amino-acid chain: Chromosomal replication initiator protein DnaA (491 aa).

The interval 1–69 (MTTWDKCLKK…TIQECHGNDL (69 aa)) is domain I, interacts with DnaA modulators. A domain II region spans residues 69–154 (LIIEYSNKKF…KEDEEYSFGL (86 aa)). The interval 155-371 (PLKEKYVFDS…GALNRVLTTS (217 aa)) is domain III, AAA+ region. 4 residues coordinate ATP: Gly-199, Gly-201, Lys-202, and Thr-203. Residues 372–491 (KFNHKDPTIE…YELLLDKISR (120 aa)) are domain IV, binds dsDNA.

The protein belongs to the DnaA family. Oligomerizes as a right-handed, spiral filament on DNA at oriC.

It localises to the cytoplasm. Its function is as follows. Plays an essential role in the initiation and regulation of chromosomal replication. ATP-DnaA binds to the origin of replication (oriC) to initiate formation of the DNA replication initiation complex once per cell cycle. Binds the DnaA box (a 9 base pair repeat at the origin) and separates the double-stranded (ds)DNA. Forms a right-handed helical filament on oriC DNA; dsDNA binds to the exterior of the filament while single-stranded (ss)DNA is stabiized in the filament's interior. The ATP-DnaA-oriC complex binds and stabilizes one strand of the AT-rich DNA unwinding element (DUE), permitting loading of DNA polymerase. After initiation quickly degrades to an ADP-DnaA complex that is not apt for DNA replication. Binds acidic phospholipids. The chain is Chromosomal replication initiator protein DnaA from Francisella tularensis subsp. holarctica (strain OSU18).